A 274-amino-acid polypeptide reads, in one-letter code: 3-methyl-2-oxobutanoate hydroxymethyltransferase (274 aa).

Mg(2+) is bound by residues aspartate 44 and aspartate 83. 3-methyl-2-oxobutanoate contacts are provided by residues 44–45, aspartate 83, and lysine 113; that span reads DS. Mg(2+) is bound at residue glutamate 115. Catalysis depends on glutamate 182, which acts as the Proton acceptor.

It belongs to the PanB family. Homodecamer; pentamer of dimers. Requires Mg(2+) as cofactor.

Its subcellular location is the cytoplasm. The catalysed reaction is 3-methyl-2-oxobutanoate + (6R)-5,10-methylene-5,6,7,8-tetrahydrofolate + H2O = 2-dehydropantoate + (6S)-5,6,7,8-tetrahydrofolate. It functions in the pathway cofactor biosynthesis; (R)-pantothenate biosynthesis; (R)-pantoate from 3-methyl-2-oxobutanoate: step 1/2. Functionally, catalyzes the reversible reaction in which hydroxymethyl group from 5,10-methylenetetrahydrofolate is transferred onto alpha-ketoisovalerate to form ketopantoate. The polypeptide is 3-methyl-2-oxobutanoate hydroxymethyltransferase (Campylobacter jejuni subsp. jejuni serotype O:6 (strain 81116 / NCTC 11828)).